A 255-amino-acid polypeptide reads, in one-letter code: Acetyl-coenzyme A carboxylase carboxyl transferase subunit alpha (255 aa).

Residues 1 to 235 enclose the CoA carboxyltransferase C-terminal domain; sequence MNIAKIVREA…KKELQTELAR (235 aa).

The protein belongs to the AccA family. In terms of assembly, acetyl-CoA carboxylase is a heterohexamer composed of biotin carboxyl carrier protein (AccB), biotin carboxylase (AccC) and two subunits each of ACCase subunit alpha (AccA) and ACCase subunit beta (AccD).

Its subcellular location is the cytoplasm. The enzyme catalyses N(6)-carboxybiotinyl-L-lysyl-[protein] + acetyl-CoA = N(6)-biotinyl-L-lysyl-[protein] + malonyl-CoA. Its pathway is lipid metabolism; malonyl-CoA biosynthesis; malonyl-CoA from acetyl-CoA: step 1/1. Functionally, component of the acetyl coenzyme A carboxylase (ACC) complex. First, biotin carboxylase catalyzes the carboxylation of biotin on its carrier protein (BCCP) and then the CO(2) group is transferred by the carboxyltransferase to acetyl-CoA to form malonyl-CoA. The protein is Acetyl-coenzyme A carboxylase carboxyl transferase subunit alpha of Streptococcus pneumoniae (strain CGSP14).